We begin with the raw amino-acid sequence, 302 residues long: Putative F-box protein At1g32420 (302 aa).

Positions 1 to 10 are enriched in basic and acidic residues; it reads MKRGNEENNH. Positions 1–27 are disordered; the sequence is MKRGNEENNHKTSSSSSTQRLSRRKIS. Residues 31 to 78 form the F-box domain; that stretch reads KSGNVNIPLDLTVEILKKLPAKSLLRFQCVSKQWLSIISSRRDFIDSI.

This is Putative F-box protein At1g32420 from Arabidopsis thaliana (Mouse-ear cress).